A 644-amino-acid polypeptide reads, in one-letter code: MSPRPLIELQDITRSFGEGELAVPVLKGIDLKIWPGEFVAIMGPSGSGKSTLMNILGCLDQPSAGQYRFNGRDVSALDRDELARLRRDAFGFVFQSYNLLPGMTARENVEIPAIYAGMAPAERHARAERLLTGLGLGERLSHRPAQLSGGQQQRVSIARALMNGGQLIFADEPTGALDSKSSQEVIRLLTDLSRQGHTIILITHDPDVAKVARRQIRIADGELVEDTGAEMPSAQIPETDQNGRRHSRLGDWQEALKSAVRSLHSNLFRTALTLLGIVIGVASVITMLAIGEGARKDVVDRISTMGSDLLLVRPGGPDQRGGRWSVTTLVPSDFKAINEIEGVLAAIPELTGGQTLRYSNRDHSAEINATSFRFPVARQWPVVEGTFFSAQDEASYAAVAVLGKTTANALFPDESPLGKHLMVNNVLFQVIGVMDEKGASPMGQDQDDVVFVPYTTGSLRIFGQTHLRNITVAVADIDRMDEIEALIHDTLMARHGIEDFTIRNMASLIETISETQNTLTWLLGSIAAISLLVGGIGVMNIMLVSVTERTREIGIRMATGARAWNILQQFLTEAWLVSAIGGLIGVVIGIAATRIIGSLGTPIHMTLLPMALAFGCAFATGLLFGFLPARKAAHLDPVHALASE.

Residues 7–245 enclose the ABC transporter domain; that stretch reads IELQDITRSF…IPETDQNGRR (239 aa). 43 to 50 is an ATP binding site; the sequence is GPSGSGKS. Transmembrane regions (helical) follow at residues 271–291, 526–546, 570–590, and 607–627; these read ALTL…LAIG, IAAI…LVSV, FLTE…VIGI, and LLPM…FGFL.

This sequence belongs to the ABC transporter superfamily. Macrolide exporter (TC 3.A.1.122) family. In terms of assembly, homodimer. Part of the tripartite efflux system MacAB-TolC, which is composed of an inner membrane transporter, MacB, a periplasmic membrane fusion protein, MacA, and an outer membrane component, TolC. The complex forms a large protein conduit and can translocate molecules across both the inner and outer membranes. Interacts with MacA.

It localises to the cell inner membrane. Functionally, part of the tripartite efflux system MacAB-TolC. MacB is a non-canonical ABC transporter that contains transmembrane domains (TMD), which form a pore in the inner membrane, and an ATP-binding domain (NBD), which is responsible for energy generation. Confers resistance against macrolides. The sequence is that of Macrolide export ATP-binding/permease protein MacB from Marinobacter nauticus (strain ATCC 700491 / DSM 11845 / VT8) (Marinobacter aquaeolei).